A 72-amino-acid polypeptide reads, in one-letter code: SRY-related protein AES1 (72 aa).

The HMG box DNA-binding region spans 1–69 (VKRPMNAFMV…KHMADYPDYK (69 aa)).

The protein localises to the nucleus. The polypeptide is SRY-related protein AES1 (Alligator mississippiensis (American alligator)).